Reading from the N-terminus, the 261-residue chain is Tryptophan synthase alpha chain (261 aa).

Catalysis depends on proton acceptor residues Glu-49 and Asp-60.

The protein belongs to the TrpA family. Tetramer of two alpha and two beta chains.

The enzyme catalyses (1S,2R)-1-C-(indol-3-yl)glycerol 3-phosphate + L-serine = D-glyceraldehyde 3-phosphate + L-tryptophan + H2O. The protein operates within amino-acid biosynthesis; L-tryptophan biosynthesis; L-tryptophan from chorismate: step 5/5. The alpha subunit is responsible for the aldol cleavage of indoleglycerol phosphate to indole and glyceraldehyde 3-phosphate. This is Tryptophan synthase alpha chain from Leifsonia xyli subsp. xyli (strain CTCB07).